Reading from the N-terminus, the 96-residue chain is CLAVATA3/ESR (CLE)-related protein 43 (96 aa).

The signal sequence occupies residues 1–28; sequence MGCRDILLTFSVALLLISLFQIWLFREG. The interval 71 to 96 is disordered; the sequence is FGLNNTNSRFEDSNRRIPSSPDRLHN. Asn74 carries N-linked (GlcNAc...) asparagine glycosylation. Pro88 and Pro91 each carry hydroxyproline. Pro91 is a glycosylation site (O-linked (Ara...) hydroxyproline).

Belongs to the CLV3/ESR signal peptide family. In terms of processing, the O-glycosylation (arabinosylation) of the hydroxyproline Pro-91 enhances binding affinity of the CLE43p peptide for its receptor. In terms of tissue distribution, expressed at low levels in seedlings.

It is found in the secreted. Its subcellular location is the extracellular space. Extracellular signal peptide that regulates cell fate. Promotes pollen tube growth prolongation in a SKM1 and SKM2-dependent manner, especially under relatively high temperature (at 30 degrees Celsius), thus conferring tolerance against high temperature probably through the maintenance of mitochondrial activity. This Arabidopsis thaliana (Mouse-ear cress) protein is CLAVATA3/ESR (CLE)-related protein 43.